A 707-amino-acid chain; its full sequence is Caprin-1 (707 aa).

Low complexity-rich tracts occupy residues 1–15 and 22–43; these read MPSA…SKSS and GSSG…PATG. The disordered stretch occupies residues 1-48; it reads MPSATSHSGSGSKSSGPPPPSGSSGSEAAAGAAAPASQHPATGTGAVQ. Pro2 carries the post-translational modification N-acetylproline. Ser10 bears the Phosphoserine mark. The stretch at 58-92 forms a coiled coil; that stretch reads VIDKKLRNLEKKKGKLDDYQERMNKGERLNQDQLD. Position 113 is a phosphoserine (Ser113). A coiled-coil region spans residues 123 to 151; that stretch reads KTIKKTARREQLMREEAEQKRLKTVLELQ. The residue at position 163 (Arg163) is an Omega-N-methylarginine. The span at 325-335 shows a compositional bias: low complexity; the sequence is LQQQPQAASPS. The disordered stretch occupies residues 325-347; the sequence is LQQQPQAASPSVPEPHSLTPVAQ. Residues Ser333 and Ser341 each carry the phosphoserine modification. The interval 358-379 is G3BP1-binding; that stretch reads QDLMAQMQGPYNFIQDSMLDFE. Disordered stretches follow at residues 412–496, 526–558, and 570–707; these read ESRL…AGTS, PANE…EQTE, and TYHG…QQVN. Residues 431 to 452 show a composition bias toward polar residues; that stretch reads PLVSSTSEGYTASQPLYQPSHA. Over residues 453–462 the composition is skewed to basic and acidic residues; sequence TEQRPQKEPM. Residues 465–474 show a composition bias toward polar residues; the sequence is IQATISLNTD. Residues 475–489 are compositionally biased toward low complexity; it reads QTTASSSLPAASQPQ. Polar residues-rich tracts occupy residues 533–552 and 572–603; these read LKQQ…SQPH and HGSQ…QPYY. Residue Tyr623 is modified to Phosphotyrosine. Omega-N-methylarginine occurs at positions 624 and 631. Tyr634 and Tyr637 each carry phosphotyrosine. Arg638 carries the post-translational modification Omega-N-methylarginine. Positions 640–655 are enriched in polar residues; it reads SFSNTPNSGYSQSQFT. Residues Ser642 and Ser647 are each glycosylated (O-linked (GlcNAc) serine). 4 positions are modified to phosphotyrosine: Tyr649, Tyr660, Tyr663, and Tyr668. 2 stretches are compositionally biased toward low complexity: residues 674–684 and 695–707; these read RGSGQSGPRGA and NRGM…QQVN. An Asymmetric dimethylarginine; alternate modification is found at Arg696. An Omega-N-methylarginine; alternate modification is found at Arg696.

Belongs to the caprin family. As to quaternary structure, may form homomultimers. Interacts with G3BP1; interaction is direct and promotes stress granule formation. Interacts with G3BP2; interaction is direct and promotes stress granule formation. Interacts with PQBP1. Interacts with DDX3X. Interacts (when phosphorylated by EPHA4) with FMR1; interaction with FMR1 promotes formation of a membraneless compartment. In terms of processing, tyrosine phosphorylation by EPHA4 promotes interaction with FMR1 and liquid-liquid phase separation (LLPS) for the formation of a membraneless compartment that concentrates mRNAs with associated regulatory factors. O-glycosylated (O-GlcNAcylated), in a cell cycle-dependent manner. O-glycosylation by OGT inhibit ability to undergo liquid-liquid phase separation (LLPS). As to expression, highest expression in thymus, spleen and brain (at protein level). Lower levels in kidney, muscle and liver (at protein level).

The protein resides in the cytoplasm. Its subcellular location is the cytoplasmic ribonucleoprotein granule. It localises to the cytosol. The protein localises to the cell projection. It is found in the dendrite. The protein resides in the lamellipodium. Its activity is regulated as follows. Ability to mediate liquid-liquid phase separation is regulated by ATP: moderate concentrations of ATP enhance phase separation, whereas high concentrations of ATP lead to inhibition of phase separation. MRNA-binding protein that acts as a regulator of mRNAs transport, translation and/or stability, and which is involved in neurogenesis, synaptic plasticity in neurons and cell proliferation and migration in multiple cell types. Plays an essential role in cytoplasmic stress granule formation. Acts as an mRNA regulator by mediating formation of some phase-separated membraneless compartment: undergoes liquid-liquid phase separation upon binding to target mRNAs, leading to assemble mRNAs into cytoplasmic ribonucleoprotein granules that concentrate mRNAs with associated regulatory factors. Undergoes liquid-liquid phase separation following phosphorylation and interaction with FMR1, promoting formation of cytoplasmic ribonucleoprotein granules that concentrate mRNAs with factors that inhibit translation and mediate deadenylation of target mRNAs. In these cytoplasmic ribonucleoprotein granules, CAPRIN1 mediates recruitment of CNOT7 deadenylase, leading to mRNA deadenylation and degradation. Binds directly and selectively to MYC and CCND2 mRNAs. In neuronal cells, directly binds to several mRNAs associated with RNA granules, including BDNF, CAMK2A, CREB1, MAP2, NTRK2 mRNAs, as well as to GRIN1 and KPNB1 mRNAs, but not to rRNAs. The polypeptide is Caprin-1 (Caprin1) (Mus musculus (Mouse)).